We begin with the raw amino-acid sequence, 28 residues long: Cliotide T21 (28 aa).

The cyclopeptide (Asp-Asn) cross-link spans aspartate 1–asparagine 28. Intrachain disulfides connect cysteine 4-cysteine 17, cysteine 8-cysteine 19, and cysteine 13-cysteine 25.

In terms of processing, contains 3 disulfide bonds. Post-translationally, this is a cyclic peptide. In terms of tissue distribution, expressed in root nodules but not in seed.

In terms of biological role, probably participates in a plant defense mechanism. Not active against Gram-negative bacterium E.coli ATCC 700926 or Gram-positive bacterium S.aureus ATCC 12600 up to a concentration of 100 uM under low-salt conditions. The sequence is that of Cliotide T21 from Clitoria ternatea (Butterfly pea).